Consider the following 102-residue polypeptide: Small ribosomal subunit protein uS10 (102 aa).

The protein belongs to the universal ribosomal protein uS10 family. Part of the 30S ribosomal subunit.

In terms of biological role, involved in the binding of tRNA to the ribosomes. This is Small ribosomal subunit protein uS10 from Allorhizobium ampelinum (strain ATCC BAA-846 / DSM 112012 / S4) (Agrobacterium vitis (strain S4)).